A 163-amino-acid polypeptide reads, in one-letter code: Transcription elongation factor GreA (163 aa).

Residues 49–80 (ENAEYDAARDRQSEVERRILELERILENAEII) are a coiled coil.

This sequence belongs to the GreA/GreB family.

Necessary for efficient RNA polymerase transcription elongation past template-encoded arresting sites. The arresting sites in DNA have the property of trapping a certain fraction of elongating RNA polymerases that pass through, resulting in locked ternary complexes. Cleavage of the nascent transcript by cleavage factors such as GreA or GreB allows the resumption of elongation from the new 3'terminus. GreA releases sequences of 2 to 3 nucleotides. The chain is Transcription elongation factor GreA from Mycoplasmopsis agalactiae (strain NCTC 10123 / CIP 59.7 / PG2) (Mycoplasma agalactiae).